The chain runs to 301 residues: Radial spoke head 1 homolog (301 aa).

Over residues 1–20 (MSDLGSEELEEEGENDLGEY) the composition is skewed to acidic residues. The segment at 1–41 (MSDLGSEELEEEGENDLGEYEGERNEVGERHGHGKARLPNG) is disordered. MORN repeat units follow at residues 20 to 43 (YEGE…NGDT), 44 to 66 (YEGS…NGAR), 67 to 89 (YTGD…DGSR), 90 to 112 (YEGE…NNDT), 113 to 135 (YTGE…ETGS), and 159 to 181 (YQGK…IGCE). The span at 21–31 (EGERNEVGERH) shows a compositional bias: basic and acidic residues. The disordered stretch occupies residues 225–301 (LSEEQPPPEG…FDEEPSDLQD (77 aa)). The segment covering 249 to 261 (PSEDIQAEGFEGE) has biased composition (acidic residues). Over residues 262 to 278 (LEPRGADEDVDTFRQES) the composition is skewed to basic and acidic residues. Residues 279–290 (QENSYDIDQGNL) show a composition bias toward polar residues. Positions 292 to 301 (FDEEPSDLQD) are enriched in acidic residues.

In terms of assembly, component of the axonemal radial spoke 1 (RS1) and 2 (RS2) complexes, at least composed of spoke head proteins RSPH1, RSPH3, RSPH9 and the cilia-specific component RSPH4A or sperm-specific component RSPH6A, spoke stalk proteins RSPH14, DNAJB13, DYDC1, ROPN1L and NME5, and the RS1 complex-specific anchor protein IQUB. Interacts with RSPH3B. Interacts with RSPH4A. Interacts with RSPH6A. As to expression, expressed in the trachea, ependymal cells, oviduct and ependymal cells (at protein level). Germ cell specific. Specifically expressed in testis, and to a lower extent in ovary. Not expressed in somatic tissues.

It localises to the cytoplasm. Its subcellular location is the chromosome. It is found in the cytoskeleton. The protein resides in the cilium axoneme. The protein localises to the flagellum axoneme. Its function is as follows. Functions as part of axonemal radial spoke complexes that play an important part in the motility of sperm and cilia. The protein is Radial spoke head 1 homolog (Rsph1) of Mus musculus (Mouse).